Reading from the N-terminus, the 60-residue chain is Large ribosomal subunit protein uL30 (60 aa).

The protein belongs to the universal ribosomal protein uL30 family. Part of the 50S ribosomal subunit.

This chain is Large ribosomal subunit protein uL30, found in Agathobacter rectalis (strain ATCC 33656 / DSM 3377 / JCM 17463 / KCTC 5835 / VPI 0990) (Eubacterium rectale).